The chain runs to 108 residues: Acid stress chaperone HdeB (108 aa).

An N-terminal signal peptide occupies residues 1-29 (MNISSLRKAFIFMGAVAALSLVNAQSALA). Residue K93 is modified to N6-acetyllysine.

This sequence belongs to the HdeB family.

The protein resides in the periplasm. In terms of biological role, required for optimal acid stress protection, which is important for survival of enteric bacteria in the acidic environment of the host stomach. Exhibits a chaperone-like activity at acidic pH by preventing the aggregation of many different periplasmic proteins. The chain is Acid stress chaperone HdeB from Escherichia coli O6:H1 (strain CFT073 / ATCC 700928 / UPEC).